A 346-amino-acid polypeptide reads, in one-letter code: Lipase chaperone (346 aa).

A helical membrane pass occupies residues 10–30; sequence TIVFGVITSVLLLLLLIYYVF.

This sequence belongs to the lipase chaperone family.

The protein localises to the cell inner membrane. In terms of biological role, may be involved in the folding of the extracellular lipase during its passage through the periplasm. The protein is Lipase chaperone (lifO) of Acinetobacter venetianus (strain ATCC 31012 / DSM 23050 / BCRC 14357 / CCUG 45561 / CIP 110063 / KCTC 2702 / LMG 19082 / RAG-1).